Reading from the N-terminus, the 533-residue chain is Dipeptidase (533 aa).

The active site involves Cys-3.

Belongs to the peptidase C69 family.

It carries out the reaction an L-aminoacyl-L-amino acid + H2O = 2 an L-alpha-amino acid. Its function is as follows. Hydrolyzes a wide range of dipeptides. Highest activity against Ala-Gln. The polypeptide is Dipeptidase (Bifidobacterium longum (strain NCC 2705)).